Reading from the N-terminus, the 225-residue chain is Prepilin leader peptidase/N-methyltransferase (225 aa).

Over 1–2 (MT) the chain is Periplasmic. A helical transmembrane segment spans residues 3-23 (MLLPLFILVGFIADYFVNAIA). Residues 24–67 (YHLSPLEDKTALTFRQVLVHFRQKKYAWHDTVPLILCVAAAIAC) lie on the Cytoplasmic side of the membrane. Residues 68–88 (ALAPFTPIVTGALFLYFCFVL) traverse the membrane as a helical segment. Residues 89 to 103 (TLSVIDFRTQLLPDK) lie on the Periplasmic side of the membrane. The helical transmembrane segment at 104–124 (LTLPLLWLGLVFNAQYGLIDL) threads the bilayer. Residues 125–127 (HDA) are Cytoplasmic-facing. Residues 128-148 (VYGAVAGYGVLWCVYWGVWLV) form a helical membrane-spanning segment. The Periplasmic portion of the chain corresponds to 149–174 (CHKEGLGYGDFKLLAAAGAWCGWQTL). A helical transmembrane segment spans residues 175-195 (PMILLIASLGGIGYAIVSQLL). Residues 196–202 (QRRTITT) lie on the Cytoplasmic side of the membrane. A helical membrane pass occupies residues 203-223 (IAFGPWLALGSMINLGYLAWI). The Periplasmic segment spans residues 224–225 (SY).

The protein belongs to the peptidase A24 family.

It is found in the cell inner membrane. The catalysed reaction is Typically cleaves a -Gly-|-Phe- bond to release an N-terminal, basic peptide of 5-8 residues from type IV prepilin, and then N-methylates the new N-terminal amino group, the methyl donor being S-adenosyl-L-methionine.. In terms of biological role, plays a role in type II pseudopili formation by proteolytically removing the leader sequence from substrate proteins and subsequently monomethylating the alpha-amino group of the newly exposed N-terminal phenylalanine. Substrates include proteins required for biogenesis of the type II general secretory apparatus. This is Prepilin leader peptidase/N-methyltransferase (gspO) from Escherichia coli (strain K12).